We begin with the raw amino-acid sequence, 342 residues long: MLKEPPKNSREKTKNLLLTLQDKICSGLENVDGKGKFTEESWLRDEGGGGRSRVLKNGSIFEQAGVNFSEVQGKELPQSIISQRPEAKGHEWFATGTSMVLHPKNPYIPTVHLNYRYFEAGPVWWFGGGADLTPFYPYLSDVRNFHNEHKKACEKVDQDLHKVFKPWCDEYFFLKHRNESRGIGGIFYDYQDGSGNIYRGNNKNGEASKASQNVGRSNLNWDNLFSLAENCGQAFLPSYLPIIEKRASQKYSPKEREFQLYRRGRYVEFNLVWDRGTIFGLQTNGRTESILMSLPPLARWEYGYKAKNGSREEFLTSIFTKPQDWFNDKELEKFCMENNIFD.

Serine 98 provides a ligand contact to substrate. Residues histidine 102 and histidine 112 each coordinate a divalent metal cation. Histidine 112 acts as the Proton donor in catalysis. 114 to 116 (NYR) lines the substrate pocket. Residues histidine 146 and histidine 176 each coordinate a divalent metal cation. An important for dimerization region spans residues 266–301 (YVEFNLVWDRGTIFGLQTNGRTESILMSLPPLARWE).

This sequence belongs to the aerobic coproporphyrinogen-III oxidase family. In terms of assembly, homodimer. A divalent metal cation serves as cofactor.

It localises to the cytoplasm. The enzyme catalyses coproporphyrinogen III + O2 + 2 H(+) = protoporphyrinogen IX + 2 CO2 + 2 H2O. Its pathway is porphyrin-containing compound metabolism; protoporphyrin-IX biosynthesis; protoporphyrinogen-IX from coproporphyrinogen-III (O2 route): step 1/1. In terms of biological role, involved in the heme and chlorophyll biosynthesis. Catalyzes the aerobic oxidative decarboxylation of propionate groups of rings A and B of coproporphyrinogen-III to yield the vinyl groups in protoporphyrinogen-IX. The sequence is that of Oxygen-dependent coproporphyrinogen-III oxidase from Prochlorococcus marinus (strain AS9601).